Consider the following 172-residue polypeptide: RTX-I toxin-activating lysine-acyltransferase ApxIC (172 aa).

Active-site residues include histidine 24 and aspartate 93.

This sequence belongs to the RTX toxin acyltransferase family. In terms of assembly, homodimer.

The protein localises to the cytoplasm. The enzyme catalyses a fatty acyl-[ACP] + L-lysyl-[protein] = N(6)-(fatty acyl)-L-lysyl-[protein] + holo-[ACP] + H(+). Protein-lysine acyltransferase that catalyzes fatty acylation of the protoxin, thereby converting it to the active toxin. This is RTX-I toxin-activating lysine-acyltransferase ApxIC from Actinobacillus pleuropneumoniae (Haemophilus pleuropneumoniae).